A 438-amino-acid polypeptide reads, in one-letter code: Serine hydroxymethyltransferase 1 (438 aa).

(6S)-5,6,7,8-tetrahydrofolate contacts are provided by residues L130 and 134–136 (GHL). K239 is modified (N6-(pyridoxal phosphate)lysine).

Belongs to the SHMT family. Homodimer. Pyridoxal 5'-phosphate is required as a cofactor.

It localises to the cytoplasm. The enzyme catalyses (6R)-5,10-methylene-5,6,7,8-tetrahydrofolate + glycine + H2O = (6S)-5,6,7,8-tetrahydrofolate + L-serine. The protein operates within one-carbon metabolism; tetrahydrofolate interconversion. It functions in the pathway amino-acid biosynthesis; glycine biosynthesis; glycine from L-serine: step 1/1. Catalyzes the reversible interconversion of serine and glycine with tetrahydrofolate (THF) serving as the one-carbon carrier. This reaction serves as the major source of one-carbon groups required for the biosynthesis of purines, thymidylate, methionine, and other important biomolecules. Also exhibits THF-independent aldolase activity toward beta-hydroxyamino acids, producing glycine and aldehydes, via a retro-aldol mechanism. Thus, is able to catalyze the cleavage of L-allo-threonine. The chain is Serine hydroxymethyltransferase 1 from Mycobacterium tuberculosis (strain ATCC 25618 / H37Rv).